The sequence spans 250 residues: Phosphate import ATP-binding protein PstB (250 aa).

Residues 4-245 enclose the ABC transporter domain; that stretch reads LTARDLKLSF…PRHELTEKYV (242 aa). 36 to 43 is an ATP binding site; sequence GPSGSGKS.

Belongs to the ABC transporter superfamily. Phosphate importer (TC 3.A.1.7) family. As to quaternary structure, the complex is composed of two ATP-binding proteins (PstB), two transmembrane proteins (PstC and PstA) and a solute-binding protein (PstS).

It is found in the cell membrane. It catalyses the reaction phosphate(out) + ATP + H2O = ADP + 2 phosphate(in) + H(+). In terms of biological role, part of the ABC transporter complex PstSACB involved in phosphate import. Responsible for energy coupling to the transport system. The protein is Phosphate import ATP-binding protein PstB of Pyrobaculum aerophilum (strain ATCC 51768 / DSM 7523 / JCM 9630 / CIP 104966 / NBRC 100827 / IM2).